A 56-amino-acid polypeptide reads, in one-letter code: Large ribosomal subunit protein bL32 (56 aa).

Positions 1 to 20 are enriched in basic residues; that stretch reads MAVPKKKKSKSKRNHRHAVW. A disordered region spans residues 1–21; sequence MAVPKKKKSKSKRNHRHAVWK.

It belongs to the bacterial ribosomal protein bL32 family.

This Prochlorococcus marinus (strain MIT 9312) protein is Large ribosomal subunit protein bL32.